A 355-amino-acid chain; its full sequence is Guanine nucleotide-binding protein G(z) subunit alpha (355 aa).

Residues 1–14 are compositionally biased toward basic and acidic residues; sequence MGCRQSSEEKEAAR. The segment at 1 to 26 is disordered; it reads MGCRQSSEEKEAARRSRRIDRHLRSE. Gly-2 carries the N-myristoyl glycine lipid modification. Residue Cys-3 is the site of S-palmitoyl cysteine attachment. One can recognise a G-alpha domain in the interval 32–355; sequence REIKLLLLGT…QNNLKYIGLC (324 aa). The tract at residues 35–48 is G1 motif; that stretch reads KLLLLGTSNSGKST. GTP-binding positions include 40-47, 176-182, 201-205, 270-273, and Ala-327; these read GTSNSGKS, LRSRDMT, DVGGQ, and NKKD. The Mg(2+) site is built by Ser-47 and Thr-182. Residues 174-182 form a G2 motif region; it reads DILRSRDMT. Residues 197–206 are G3 motif; it reads FKMVDVGGQR. The segment at 266-273 is G4 motif; it reads ILFLNKKD. The G5 motif stretch occupies residues 325–330; sequence TCATDT.

The protein belongs to the G-alpha family. G(i/o/t/z) subfamily. As to quaternary structure, G-proteins are composed of 3 units; alpha, beta and gamma. The alpha chain contains the guanine nucleotide binding site. Interacts with ADGRB2.

It is found in the membrane. Guanine nucleotide-binding proteins (G proteins) are involved as modulators or transducers in various transmembrane signaling systems. The protein is Guanine nucleotide-binding protein G(z) subunit alpha (Gnaz) of Mus musculus (Mouse).